The chain runs to 377 residues: Flap endonuclease 1 (377 aa).

Positions Met1–Arg104 are N-domain. Asp34 provides a ligand contact to Mg(2+). DNA is bound by residues Arg47 and Arg70. The Mg(2+) site is built by Asp86, Glu158, Glu160, Asp179, and Asp181. The tract at residues Asn122–His253 is I-domain. Glu158 contacts DNA. Residues Gly231 and Asp233 each coordinate DNA. Asp233 lines the Mg(2+) pocket. The interval Thr336–Phe344 is interaction with PCNA. Positions Gln337–Lys377 are disordered. Positions Gln363–Lys377 are enriched in basic residues.

This sequence belongs to the XPG/RAD2 endonuclease family. FEN1 subfamily. Interacts with PCNA. Three molecules of FEN1 bind to one PCNA trimer with each molecule binding to one PCNA monomer. PCNA stimulates the nuclease activity without altering cleavage specificity. Mg(2+) serves as cofactor. Phosphorylated. Phosphorylation upon DNA damage induces relocalization to the nuclear plasma.

It is found in the nucleus. The protein resides in the nucleolus. The protein localises to the nucleoplasm. Its subcellular location is the mitochondrion. Its function is as follows. Structure-specific nuclease with 5'-flap endonuclease and 5'-3' exonuclease activities involved in DNA replication and repair. During DNA replication, cleaves the 5'-overhanging flap structure that is generated by displacement synthesis when DNA polymerase encounters the 5'-end of a downstream Okazaki fragment. It enters the flap from the 5'-end and then tracks to cleave the flap base, leaving a nick for ligation. Also involved in the long patch base excision repair (LP-BER) pathway, by cleaving within the apurinic/apyrimidinic (AP) site-terminated flap. Acts as a genome stabilization factor that prevents flaps from equilibrating into structures that lead to duplications and deletions. Also possesses 5'-3' exonuclease activity on nicked or gapped double-stranded DNA, and exhibits RNase H activity. Also involved in replication and repair of rDNA and in repairing mitochondrial DNA. This chain is Flap endonuclease 1, found in Nematostella vectensis (Starlet sea anemone).